The primary structure comprises 226 residues: Transmembrane protein 204 (226 aa).

The Cytoplasmic portion of the chain corresponds to 1-5; that stretch reads MTVQR. The chain crosses the membrane as a helical span at residues 6-26; the sequence is LVAAAVLVALVSLILNNVAAF. The Extracellular segment spans residues 27–103; it reads TSNWVCQTLE…LQFDMMRACN (77 aa). Residues 104–124 traverse the membrane as a helical segment; sequence LVATAALTAGQLTFLLGLVGL. Over 125–136 the chain is Cytoplasmic; that stretch reads PLLSPDAPCWEE. The chain crosses the membrane as a helical span at residues 137-157; sequence AMAAAFQLASFVLVIGLVTFY. At 158–170 the chain is on the extracellular side; the sequence is RIGPYTNLSWSCY. An N-linked (GlcNAc...) asparagine glycan is attached at asparagine 164. Residues 171-191 traverse the membrane as a helical segment; it reads LNIGACLLATLAAAMLIWNIL. Residues 192–226 are Cytoplasmic-facing; sequence HKREDCMAPRVIVISRSLTARFRRGLDNDYVESPC.

Highly expressed in lung, heart, kidney and placenta. Lower expression in thymus, spleen, liver, testis and ovary. Expressed in endothelial and restricted epithelial cell populations.

The protein localises to the cell junction. Its subcellular location is the adherens junction. The protein resides in the cell membrane. Functionally, can influence paracellular permeability. Appears to be involved in cell-cell interactions through adherens. The chain is Transmembrane protein 204 (TMEM204) from Homo sapiens (Human).